We begin with the raw amino-acid sequence, 421 residues long: UDP-N-acetylglucosamine 1-carboxyvinyltransferase 1 (421 aa).

Position 22–23 (22–23) interacts with phosphoenolpyruvate; the sequence is KN. Arginine 94 lines the UDP-N-acetyl-alpha-D-glucosamine pocket. The Proton donor role is filled by cysteine 118. Residue cysteine 118 is modified to 2-(S-cysteinyl)pyruvic acid O-phosphothioketal. Residues 123-127, aspartate 310, and valine 332 each bind UDP-N-acetyl-alpha-D-glucosamine; that span reads RPIEL.

The protein belongs to the EPSP synthase family. MurA subfamily.

It is found in the cytoplasm. The enzyme catalyses phosphoenolpyruvate + UDP-N-acetyl-alpha-D-glucosamine = UDP-N-acetyl-3-O-(1-carboxyvinyl)-alpha-D-glucosamine + phosphate. The protein operates within cell wall biogenesis; peptidoglycan biosynthesis. Cell wall formation. Adds enolpyruvyl to UDP-N-acetylglucosamine. The protein is UDP-N-acetylglucosamine 1-carboxyvinyltransferase 1 of Clostridium perfringens (strain 13 / Type A).